The following is a 283-amino-acid chain: Probable endonuclease 4 (283 aa).

Zn(2+) is bound by residues histidine 67, histidine 107, glutamate 144, aspartate 178, histidine 181, histidine 215, aspartate 228, histidine 230, and glutamate 260.

Belongs to the AP endonuclease 2 family. The cofactor is Zn(2+).

The catalysed reaction is Endonucleolytic cleavage to 5'-phosphooligonucleotide end-products.. Functionally, endonuclease IV plays a role in DNA repair. It cleaves phosphodiester bonds at apurinic or apyrimidinic (AP) sites, generating a 3'-hydroxyl group and a 5'-terminal sugar phosphate. This Citrifermentans bemidjiense (strain ATCC BAA-1014 / DSM 16622 / JCM 12645 / Bem) (Geobacter bemidjiensis) protein is Probable endonuclease 4.